The primary structure comprises 492 residues: GMP reductase (492 aa).

Residues 30 to 31 (SR) and arginine 78 contribute to the NADP(+) site. 2 consecutive CBS domains span residues 99-162 (LIED…LVET) and 164-223 (MTPV…RNAT). NADP(+)-binding positions include 260-262 (DIA) and 313-314 (VG). Glycine 314, glycine 316, and cysteine 319 together coordinate K(+). Catalysis depends on cysteine 319, which acts as the Thioimidate intermediate. The Proton donor/acceptor role is filled by threonine 321. K(+) is bound at residue arginine 322. Residues 352 to 354 (DGG), 375 to 376 (GN), and 401 to 403 (GMA) contribute to the GMP site. NADP(+)-binding positions include methionine 402 and 454-457 (SGIS). Residues 490–492 (SKL) carry the Microbody targeting signal motif.

Belongs to the IMPDH/GMPR family. GuaC type 1 subfamily. As to quaternary structure, homotetramer.

Its subcellular location is the glycosome. The enzyme catalyses IMP + NH4(+) + NADP(+) = GMP + NADPH + 2 H(+). With respect to regulation, activated by GTP and inhibited by XMP and the IMP analogs allopurinol nucleotide and thiopurinol nucleotide. Its function is as follows. Catalyzes the irreversible NADPH-dependent deamination of GMP to IMP. It functions in the conversion of nucleobase, nucleoside and nucleotide derivatives of G to A nucleotides, and in maintaining the intracellular balance of A and G nucleotides. This is GMP reductase from Leishmania donovani.